A 331-amino-acid polypeptide reads, in one-letter code: Transmembrane protein 59-like (331 aa).

The first 21 residues, 1–21 (MAAVALPLLLLLASPATPTPA), serve as a signal peptide directing secretion. Residues 15–62 (PATPTPARDPFSPQLGDTQRCQQRCRQRHPGLPPAQPEPEGPSESPNN) are disordered. Residues 45–54 (GLPPAQPEPE) show a composition bias toward pro residues. N-linked (GlcNAc...) asparagine glycosylation occurs at Asn-90. Residues 258–278 (VLFCCLFLSVLIILWLSCCTL) traverse the membrane as a helical segment. Positions 329-331 (TTL) match the Microbody targeting signal motif.

The protein belongs to the TMEM59 family.

The protein resides in the golgi apparatus membrane. Functionally, modulates the O-glycosylation and complex N-glycosylation steps occurring during the Golgi maturation of APP. Inhibits APP transport to the cell surface and further shedding. In Rattus norvegicus (Rat), this protein is Transmembrane protein 59-like (Tmem59l).